The primary structure comprises 428 residues: Adenylosuccinate synthetase (428 aa).

Residues Gly-12 to Lys-18 and Gly-40 to Thr-42 contribute to the GTP site. The Proton acceptor role is filled by Asp-13. 2 residues coordinate Mg(2+): Asp-13 and Gly-40. Residues Asp-13–Lys-16, Asn-38–His-41, Thr-133, Arg-147, Asn-224, Thr-239, and Arg-303 each bind IMP. His-41 acts as the Proton donor in catalysis. Residue Thr-299–Arg-305 coordinates substrate. Residues Arg-305, Lys-331–Asp-333, and Gly-413–Gly-415 each bind GTP.

It belongs to the adenylosuccinate synthetase family. Homodimer. Mg(2+) serves as cofactor.

The protein localises to the cytoplasm. The enzyme catalyses IMP + L-aspartate + GTP = N(6)-(1,2-dicarboxyethyl)-AMP + GDP + phosphate + 2 H(+). Its pathway is purine metabolism; AMP biosynthesis via de novo pathway; AMP from IMP: step 1/2. In terms of biological role, plays an important role in the de novo pathway and in the salvage pathway of purine nucleotide biosynthesis. Catalyzes the first committed step in the biosynthesis of AMP from IMP. The polypeptide is Adenylosuccinate synthetase (Coprinopsis cinerea (strain Okayama-7 / 130 / ATCC MYA-4618 / FGSC 9003) (Inky cap fungus)).